A 105-amino-acid chain; its full sequence is Phosphoribosyl-ATP pyrophosphatase (105 aa).

It belongs to the PRA-PH family.

The protein localises to the cytoplasm. It catalyses the reaction 1-(5-phospho-beta-D-ribosyl)-ATP + H2O = 1-(5-phospho-beta-D-ribosyl)-5'-AMP + diphosphate + H(+). The protein operates within amino-acid biosynthesis; L-histidine biosynthesis; L-histidine from 5-phospho-alpha-D-ribose 1-diphosphate: step 2/9. In Methylococcus capsulatus (strain ATCC 33009 / NCIMB 11132 / Bath), this protein is Phosphoribosyl-ATP pyrophosphatase.